The primary structure comprises 66 residues: Beta-mammal toxin Cv2 (66 aa).

An LCN-type CS-alpha/beta domain is found at 1–66 (KEGYIVNHST…VWPLPKKTCN (66 aa)). Disulfide bonds link Cys12/Cys65, Cys16/Cys41, Cys25/Cys46, and Cys29/Cys48.

As to expression, expressed by the venom gland.

The protein localises to the secreted. Its activity is regulated as follows. Is susceptible to be slightly neutralized by human antibodies scFvs 10FG2. Functionally, beta toxins bind voltage-independently at site-4 of sodium channels (Nav) and reduces peak current and shifts the voltage of activation toward more negative potentials thereby affecting sodium channel activation and promoting spontaneous and repetitive firing. This toxin is slightly toxic to mice. In Centruroides villegasi (Scorpion), this protein is Beta-mammal toxin Cv2.